The sequence spans 974 residues: ATP-dependent RNA helicase DBP7 (974 aa).

Residues 1–135 form a disordered region; it reads MDDNDDGLML…SSAASSSRKA (135 aa). Residues 13 to 24 are compositionally biased toward low complexity; the sequence is AAPAAGSASVSS. The span at 25 to 48 shows a compositional bias: basic residues; sequence KRSKQTAKARFAQKRTAHQLRKQA. 3 stretches are compositionally biased toward low complexity: residues 67–85, 92–102, and 118–133; these read PASA…SPAA, ATSTSSAALSA, and TSRS…SSSR. The short motif at 200-230 is the Q motif element; it reads SDFASCGLDPLLVYHLASKMNIGSNPTAIQK. The region spanning 236–477 is the Helicase ATP-binding domain; sequence LLHPGLDRDI…GKTLVNPKII (242 aa). 249–256 lines the ATP pocket; it reads AQTGSGKT. The short motif at 381 to 384 is the DEAD box element; it reads DEAD. The region spanning 531–747 is the Helicase C-terminal domain; sequence LLRSYISRAR…TRKITPASIE (217 aa). The tract at residues 836–887 is disordered; the sequence is KSSAIGASSTPASSHETTNKKRMRIAPDTAESDSSSDSSDDAGSDYESHSNK. Positions 840–851 are enriched in polar residues; it reads IGASSTPASSHE.

This sequence belongs to the DEAD box helicase family. DDX31/DBP7 subfamily.

The protein resides in the nucleus. The protein localises to the nucleolus. The catalysed reaction is ATP + H2O = ADP + phosphate + H(+). In terms of biological role, ATP-binding RNA helicase involved in the biogenesis of 60S ribosomal subunits and is required for the normal formation of 25S and 5.8S rRNAs. The polypeptide is ATP-dependent RNA helicase DBP7 (DBP7) (Mycosarcoma maydis (Corn smut fungus)).